We begin with the raw amino-acid sequence, 427 residues long: uncharacterized protein (427 aa).

3 helical membrane passes run Leu10–Trp30, Lys43–Ala63, and Ile71–Ser91. The residue at position 199 (Thr199) is a Phosphothreonine. The residue at position 234 (Ser234) is a Phosphoserine. 5 helical membrane-spanning segments follow: residues Asn253–Leu273, Phe288–Gly308, Leu327–Ile347, Ile358–Ile378, and Ile397–Ala417.

The protein belongs to the auxin efflux carrier (TC 2.A.69) family.

Its subcellular location is the membrane. This is an uncharacterized protein from Saccharomyces cerevisiae (strain ATCC 204508 / S288c) (Baker's yeast).